We begin with the raw amino-acid sequence, 509 residues long: Zinc finger CCCH-type with G patch domain-containing protein (509 aa).

Residues 41 to 61 (TRGSEPEATSDTKTPETSDNI) are disordered. Positions 47–58 (EATSDTKTPETS) are enriched in polar residues. The C3H1-type zinc-finger motif lies at 155–178 (PCNYFLEGECRFDEVRCRYSHGAL). Residues 254 to 278 (DDDLTSESEESNETDGSDAGNDSDM) form a disordered region. The G-patch domain occupies 310–356 (TRGIGSKLMANMGYIHGTGLGSDGRGIVTPVSAQILPQGRSLDACME). A disordered region spans residues 410–433 (GSQQTENANKKTKPNNLQQHSNKT). Residues 423–433 (PNNLQQHSNKT) are compositionally biased toward polar residues.

It localises to the nucleus. In terms of biological role, transcription repressor. The sequence is that of Zinc finger CCCH-type with G patch domain-containing protein from Drosophila mojavensis (Fruit fly).